Here is a 92-residue protein sequence, read N- to C-terminus: Acyl carrier protein AcpXL (92 aa).

The region spanning 2 to 88 (TATFDKVADI…NLCAKIDELK (87 aa)) is the Carrier domain. Residue S37 is modified to O-(pantetheine 4'-phosphoryl)serine.

In terms of processing, 4'-phosphopantetheine is transferred from CoA to a specific serine of apo-ACP by AcpS. This modification is essential for activity because fatty acids are bound in thioester linkage to the sulfhydryl of the prosthetic group.

The protein resides in the cytoplasm. It functions in the pathway glycolipid biosynthesis; KDO(2)-lipid A biosynthesis. In terms of biological role, carrier of the growing fatty acid chain in fatty acid biosynthesis. Is involved in the transfer of long hydroxylated fatty acids to lipid A. Is acylated predominantly with 27-hydroxyoctacosanoic acid. In Rhizobium etli (strain ATCC 51251 / DSM 11541 / JCM 21823 / NBRC 15573 / CFN 42), this protein is Acyl carrier protein AcpXL (acpXL).